Reading from the N-terminus, the 376-residue chain is MSDNSQNLLYDKFELPKSVKMMTVEGSGGSIDKHARFVAEPLERGMGHTLGNALRRALLIGLEAPAIISFSMTGVLHEYMAIEGIIEDVTNIVLNLKGALLKKYPFQDSEDGRRPQLLKSMISIDASDLAACGGQRAVTLADLLQEGGFEAVNPEHVIFTVTQPMQVEVALRVAFGRGYSTSERIILEDKGVNEIVLDAAFSPVVLVNYFVEDTRVGQDTDFDRLILYVETDGRVSPKEALAFSTQILTKHFSIFEKMDEKKIVFEEAISIEKENKDDILHKLVLGINEIELSVRSTNCLSNANIETIGELVIMPEPRLLQFRNFGKKSLCEIKNKLKEMKLELGMDLSQFGVGLDNVKEKMKWYAEKIRSKNVKG.

Residues 1–259 (MSDNSQNLLY…KHFSIFEKMD (259 aa)) are alpha N-terminal domain (alpha-NTD). The alpha C-terminal domain (alpha-CTD) stretch occupies residues 276–376 (KDDILHKLVL…EKIRSKNVKG (101 aa)).

The protein belongs to the RNA polymerase alpha chain family. Homodimer. The RNAP catalytic core consists of 2 alpha, 1 beta, 1 beta' and 1 omega subunit. When a sigma factor is associated with the core the holoenzyme is formed, which can initiate transcription.

It carries out the reaction RNA(n) + a ribonucleoside 5'-triphosphate = RNA(n+1) + diphosphate. In terms of biological role, DNA-dependent RNA polymerase catalyzes the transcription of DNA into RNA using the four ribonucleoside triphosphates as substrates. This chain is DNA-directed RNA polymerase subunit alpha, found in Chlamydia felis (strain Fe/C-56) (Chlamydophila felis).